The following is a 736-amino-acid chain: Putative ATP-dependent RNA helicase CG14443 (736 aa).

Disordered stretches follow at residues 32–58, 73–166, 183–237, and 265–296; these read TKSS…SSVL, GIEG…GERP, NSFK…NSWR, and SFTR…NTWK. Low complexity-rich tracts occupy residues 34-58 and 125-160; these read SSIW…SSVL and SSES…SHGS. Residues 190–199 show a composition bias toward basic and acidic residues; it reads TSRENKESRS. The span at 277-296 shows a compositional bias: polar residues; sequence LCYQDQSKNPSRPSNYNTWK. Positions 330–358 match the Q motif motif; the sequence is LSFERSGFNATILQQLEDQGYDGPTPIQA. The region spanning 361–534 is the Helicase ATP-binding domain; that stretch reads WSIAKEGKNI…NKFLGQYTAI (174 aa). 374-381 is a binding site for ATP; the sequence is SGKGTGKT. Residues 482 to 485 carry the DEAD box motif; the sequence is DNID. The 159-residue stretch at 561-719 folds into the Helicase C-terminal domain; the sequence is KVERLMKELT…LLQLAEEKMF (159 aa).

It belongs to the DEAD box helicase family.

It catalyses the reaction ATP + H2O = ADP + phosphate + H(+). Functionally, probable ATP-binding RNA helicase. In Drosophila melanogaster (Fruit fly), this protein is Putative ATP-dependent RNA helicase CG14443.